A 243-amino-acid polypeptide reads, in one-letter code: Hydroxyacylglutathione hydrolase (243 aa).

Residues His-59, His-61, Asp-63, His-64, His-117, Asp-135, and His-173 each coordinate Zn(2+).

Belongs to the metallo-beta-lactamase superfamily. Glyoxalase II family. As to quaternary structure, monomer. It depends on Zn(2+) as a cofactor.

It catalyses the reaction an S-(2-hydroxyacyl)glutathione + H2O = a 2-hydroxy carboxylate + glutathione + H(+). It participates in secondary metabolite metabolism; methylglyoxal degradation; (R)-lactate from methylglyoxal: step 2/2. Its function is as follows. Thiolesterase that catalyzes the hydrolysis of S-D-lactoyl-glutathione to form glutathione and D-lactic acid. The polypeptide is Hydroxyacylglutathione hydrolase (Acidiphilium cryptum (strain JF-5)).